The primary structure comprises 162 residues: MNISATARSLLLQEFVSAFFLAMRYFFKPKPTLNYPFEKGPISPRFRGEHALRRYPNGEERCIACKLCEAVCPAQAITIEAGPRRNDGTRRTVRYDIDMVKCIYCGLCQEACPVDAIVEGPNFEFATETREELYYDKAKLLANGDRWEREISKAIALDAPYR.

2 4Fe-4S ferredoxin-type domains span residues 52-82 and 93-122; these read LRRY…IEAG and VRYD…EGPN. 8 residues coordinate [4Fe-4S] cluster: Cys62, Cys65, Cys68, Cys72, Cys102, Cys105, Cys108, and Cys112.

The protein belongs to the complex I 23 kDa subunit family. As to quaternary structure, NDH-1 is composed of 14 different subunits. Subunits NuoA, H, J, K, L, M, N constitute the membrane sector of the complex. The cofactor is [4Fe-4S] cluster.

It localises to the cell inner membrane. The enzyme catalyses a quinone + NADH + 5 H(+)(in) = a quinol + NAD(+) + 4 H(+)(out). Functionally, NDH-1 shuttles electrons from NADH, via FMN and iron-sulfur (Fe-S) centers, to quinones in the respiratory chain. The immediate electron acceptor for the enzyme in this species is believed to be ubiquinone. Couples the redox reaction to proton translocation (for every two electrons transferred, four hydrogen ions are translocated across the cytoplasmic membrane), and thus conserves the redox energy in a proton gradient. This is NADH-quinone oxidoreductase subunit I from Bradyrhizobium sp. (strain ORS 278).